Here is a 323-residue protein sequence, read N- to C-terminus: Probable cell division protein WhiA (323 aa).

Residues 275–309 (TLKELGEMLTTGQVSKSGINHRLRKLDQIAERLRS) constitute a DNA-binding region (H-T-H motif).

This sequence belongs to the WhiA family.

Its function is as follows. Involved in cell division and chromosome segregation. The sequence is that of Probable cell division protein WhiA from Listeria welshimeri serovar 6b (strain ATCC 35897 / DSM 20650 / CCUG 15529 / CIP 8149 / NCTC 11857 / SLCC 5334 / V8).